Here is a 240-residue protein sequence, read N- to C-terminus: Homeobox protein goosecoid (240 aa).

The segment at residues 146-205 (KRRHRTIFTDEQLEALENLFQETKYPDVGTREQLARKVHLREEKVEVWFKNRRAKWRRQK) is a DNA-binding region (homeobox). A disordered region spans residues 199–240 (AKWRRQKRSSSEESENSQKWNKSTKTTSEKIEEGKSDVDSDS). Over residues 225 to 240 (TSEKIEEGKSDVDSDS) the composition is skewed to basic and acidic residues.

Belongs to the paired homeobox family. Bicoid subfamily.

It localises to the nucleus. The chain is Homeobox protein goosecoid (gsc) from Danio rerio (Zebrafish).